Consider the following 85-residue polypeptide: Large ribosomal subunit protein bL27 (85 aa).

Belongs to the bacterial ribosomal protein bL27 family.

The sequence is that of Large ribosomal subunit protein bL27 from Cellvibrio japonicus (strain Ueda107) (Pseudomonas fluorescens subsp. cellulosa).